The following is a 661-amino-acid chain: Altered inheritance of mitochondria protein 3-1 (661 aa).

7 disordered regions span residues 19-99 (TKTV…YSGY), 116-142 (AQNTPYSSPAQQQPVSPQPPVQNSQYN), 154-194 (QPAG…TFQS), 263-419 (LPQQ…DSSS), 431-473 (RNIP…SPGI), 487-563 (YAGH…RKDN), and 615-661 (EAAT…FVHS). Residues 37 to 58 (KDKDTHHTDHHEEDEYSEDYHT) show a composition bias toward basic and acidic residues. Residues 120-142 (PYSSPAQQQPVSPQPPVQNSQYN) show a composition bias toward low complexity. Residues 263–318 (LPQQQQQQQQQPEYNTQLQQNQQLHNQQAYGQQQQIYSNNTQPQYVSQTQQTSYTQ) show a composition bias toward low complexity. 2 stretches are compositionally biased toward polar residues: residues 319-328 (NAPPQQTRSP) and 356-371 (VNQTAITSTNSANEAL). Over residues 390–399 (THRDRGRASV) the composition is skewed to basic and acidic residues. The segment covering 406-419 (ENMQTNNSTIDSSS) has biased composition (polar residues). The segment covering 434-447 (PAPAVGPPGAATRA) has biased composition (low complexity). Composition is skewed to polar residues over residues 458 to 473 (SQSMSTNSVVETSPGI), 512 to 533 (RSTSTKMNTQPNPQTPISPSRD), and 541 to 552 (RSTVSSIQSSNR).

The protein belongs to the AIM3 family.

It is found in the membrane raft. The sequence is that of Altered inheritance of mitochondria protein 3-1 (AIM3-1) from Candida glabrata (strain ATCC 2001 / BCRC 20586 / JCM 3761 / NBRC 0622 / NRRL Y-65 / CBS 138) (Yeast).